The chain runs to 438 residues: Adenylosuccinate synthetase (438 aa).

Residues G13–K19 and G41–T43 contribute to the GTP site. The active-site Proton acceptor is the D14. The Mg(2+) site is built by D14 and G41. IMP-binding positions include D14 to K17, N39 to H42, T130, R144, Q225, T240, and R312. The active-site Proton donor is the H42. Substrate is bound at residue A308–R314. GTP-binding positions include R314, K340–D342, and S422–G424.

It belongs to the adenylosuccinate synthetase family. As to quaternary structure, homodimer. It depends on Mg(2+) as a cofactor.

Its subcellular location is the cytoplasm. The catalysed reaction is IMP + L-aspartate + GTP = N(6)-(1,2-dicarboxyethyl)-AMP + GDP + phosphate + 2 H(+). The protein operates within purine metabolism; AMP biosynthesis via de novo pathway; AMP from IMP: step 1/2. Functionally, plays an important role in the de novo pathway of purine nucleotide biosynthesis. Catalyzes the first committed step in the biosynthesis of AMP from IMP. The protein is Adenylosuccinate synthetase of Ruthia magnifica subsp. Calyptogena magnifica.